Consider the following 368-residue polypeptide: 1-aminocyclopropane-1-carboxylate oxidase (368 aa).

The 131-residue stretch at 177–307 folds into the Fe2OG dioxygenase domain; sequence PFILMGLLHY…RFSIPFFLDP (131 aa). The segment at 191–226 is disordered; sequence HQEQEEEQEDDESNNGGKKSPNPDESKKPEVEKFGT. Residues 194-203 are compositionally biased toward acidic residues; the sequence is QEEEQEDDES. The span at 211 to 223 shows a compositional bias: basic and acidic residues; the sequence is PNPDESKKPEVEK. The Fe cation site is built by His-229, Asp-231, and His-287. Arg-298 contacts 2-oxoglutarate.

Belongs to the iron/ascorbate-dependent oxidoreductase family. The cofactor is Fe(2+).

The enzyme catalyses 1-aminocyclopropane-1-carboxylate + L-ascorbate + O2 = ethene + L-dehydroascorbate + hydrogen cyanide + CO2 + 2 H2O. It functions in the pathway alkene biosynthesis; ethylene biosynthesis via S-adenosyl-L-methionine; ethylene from S-adenosyl-L-methionine: step 2/2. Involved in ethylene biosynthesis. Overexpression induces overproduction of ethylene. The protein is 1-aminocyclopropane-1-carboxylate oxidase (aco) of Dictyostelium discoideum (Social amoeba).